Consider the following 760-residue polypeptide: Anti-sigma-I factor RsgI6 (760 aa).

Topologically, residues 1-55 (MIVGKVLDMDEKTAIIMTDDFAFLNVVRTSEMAVGKKVKVLDSDIIKPKNSLRRY) are cytoplasmic. The RsgI N-terminal anti-sigma domain maps to 2 to 49 (IVGKVLDMDEKTAIIMTDDFAFLNVVRTSEMAVGKKVKVLDSDIIKPK). Residues 56–76 (LPVAAVAACFVIVLSFVLMFI) traverse the membrane as a helical segment. Over 77 to 760 (NGNTARKNIY…GTLQTTYRIP (684 aa)) the chain is Extracellular. The segment at 274-352 (AINTGPAESA…STPKPVSPVQ (79 aa)) is disordered. Over residues 291 to 352 (LPATSTPGRT…STPKPVSPVQ (62 aa)) the composition is skewed to polar residues. A GH10 domain is found at 402–701 (DSSNKPIENA…NEAGRRFESL (300 aa)). Glu538 (proton donor) is an active-site residue. Glu635 acts as the Nucleophile in catalysis.

This sequence in the C-terminal section; belongs to the glycosyl hydrolase 10 (cellulase F) family. Interacts (via RsgI N-terminal anti-sigma domain) with SigI6.

It localises to the cell membrane. The catalysed reaction is Endohydrolysis of (1-&gt;4)-beta-D-xylosidic linkages in xylans.. It participates in glycan degradation; xylan degradation. Anti-sigma factor for SigI6. Negatively regulates SigI6 activity through direct interaction. Binding of the polysaccharide substrate to the extracellular C-terminal sensing domain of RsgI6 may induce a conformational change in its N-terminal cytoplasmic region, leading to the release and activation of SigI6. Binds to and hydrolyzes insoluble and soluble xylan substrates. Has low enzymatic activity. The chain is Anti-sigma-I factor RsgI6 from Acetivibrio thermocellus (strain ATCC 27405 / DSM 1237 / JCM 9322 / NBRC 103400 / NCIMB 10682 / NRRL B-4536 / VPI 7372) (Clostridium thermocellum).